A 137-amino-acid polypeptide reads, in one-letter code: Fluoride-specific ion channel FluC 2 (137 aa).

A run of 4 helical transmembrane segments spans residues 3–23 (MGGSFVVLSGVIAIVVGSVLG), 44–64 (WGTMTINVTGAFLIGIFGALA), 76–96 (PWLFAVTGFLGCYTTVSSFSL), and 111–131 (LGNVAFSVGLCLAAVSCGFLL). 2 residues coordinate Na(+): Gly-86 and Thr-89.

It belongs to the fluoride channel Fluc/FEX (TC 1.A.43) family.

It localises to the cell inner membrane. It catalyses the reaction fluoride(in) = fluoride(out). Its activity is regulated as follows. Na(+) is not transported, but it plays an essential structural role and its presence is essential for fluoride channel function. Fluoride-specific ion channel. Important for reducing fluoride concentration in the cell, thus reducing its toxicity. This Bradyrhizobium diazoefficiens (strain JCM 10833 / BCRC 13528 / IAM 13628 / NBRC 14792 / USDA 110) protein is Fluoride-specific ion channel FluC 2.